The sequence spans 355 residues: Alanine racemase (355 aa).

Residue Lys-34 is the Proton acceptor; specific for D-alanine of the active site. Lys-34 is subject to N6-(pyridoxal phosphate)lysine. Residue Arg-133 participates in substrate binding. Tyr-249 functions as the Proton acceptor; specific for L-alanine in the catalytic mechanism. Position 297 (Met-297) interacts with substrate.

Belongs to the alanine racemase family. Requires pyridoxal 5'-phosphate as cofactor.

The enzyme catalyses L-alanine = D-alanine. It functions in the pathway amino-acid biosynthesis; D-alanine biosynthesis; D-alanine from L-alanine: step 1/1. Its function is as follows. Catalyzes the interconversion of L-alanine and D-alanine. May also act on other amino acids. This chain is Alanine racemase (alr), found in Rickettsia rickettsii (strain Sheila Smith).